The primary structure comprises 304 residues: Ornithine carbamoyltransferase (304 aa).

Residues 53–56 (STRT), Q80, R104, and 131–134 (HPCQ) contribute to the carbamoyl phosphate site. Residues N162, D219, and 223–224 (SM) contribute to the L-ornithine site. Carbamoyl phosphate-binding positions include 259–260 (CL) and R287.

Belongs to the aspartate/ornithine carbamoyltransferase superfamily. OTCase family.

The protein localises to the cytoplasm. The enzyme catalyses carbamoyl phosphate + L-ornithine = L-citrulline + phosphate + H(+). It participates in amino-acid biosynthesis; L-arginine biosynthesis; L-arginine from L-ornithine and carbamoyl phosphate: step 1/3. Functionally, reversibly catalyzes the transfer of the carbamoyl group from carbamoyl phosphate (CP) to the N(epsilon) atom of ornithine (ORN) to produce L-citrulline. This is Ornithine carbamoyltransferase from Nitrosococcus oceani (strain ATCC 19707 / BCRC 17464 / JCM 30415 / NCIMB 11848 / C-107).